A 587-amino-acid chain; its full sequence is Aspartate--tRNA ligase (587 aa).

Residue Glu174 participates in L-aspartate binding. An aspartate region spans residues 198-201 (QITK). Arg220 serves as a coordination point for L-aspartate. Residues 220 to 222 (RDE) and Gln229 contribute to the ATP site. His443 contacts L-aspartate. Glu477 is a binding site for ATP. Residue Arg484 coordinates L-aspartate. Position 529–532 (529–532 (GLDR)) interacts with ATP.

The protein belongs to the class-II aminoacyl-tRNA synthetase family. Type 1 subfamily. Homodimer.

The protein resides in the cytoplasm. The enzyme catalyses tRNA(Asp) + L-aspartate + ATP = L-aspartyl-tRNA(Asp) + AMP + diphosphate. Its function is as follows. Catalyzes the attachment of L-aspartate to tRNA(Asp) in a two-step reaction: L-aspartate is first activated by ATP to form Asp-AMP and then transferred to the acceptor end of tRNA(Asp). In Streptococcus pneumoniae serotype 2 (strain D39 / NCTC 7466), this protein is Aspartate--tRNA ligase.